The following is a 127-amino-acid chain: uncharacterized protein (127 aa).

Residues 1–24 (PLKTKPIDNNLPHRTGYNQASKQQ) form a disordered region.

This is an uncharacterized protein from Homo sapiens (Human).